A 231-amino-acid polypeptide reads, in one-letter code: Adenylate kinase (231 aa).

12 to 17 (GAGKGT) provides a ligand contact to ATP. The NMP stretch occupies residues 32-61 (STGDMLRAAVKAKTPLGLEVKKIMESGGLV). AMP-binding positions include Thr33, Arg38, 59 to 61 (GLV), 87 to 90 (GFPR), and Gln94. The segment at 124-161 (GRLIHPASGRTYHRRYNPPKVADKDDVTGEPLIQRADD) is LID. ATP is bound by residues Arg125 and 134–135 (TY). Residues Arg158 and Arg169 each contribute to the AMP site. Position 205 (Gly205) interacts with ATP.

This sequence belongs to the adenylate kinase family. As to quaternary structure, monomer.

It localises to the cytoplasm. It catalyses the reaction AMP + ATP = 2 ADP. Its pathway is purine metabolism; AMP biosynthesis via salvage pathway; AMP from ADP: step 1/1. Its function is as follows. Catalyzes the reversible transfer of the terminal phosphate group between ATP and AMP. Plays an important role in cellular energy homeostasis and in adenine nucleotide metabolism. This chain is Adenylate kinase, found in Coxiella burnetii (strain CbuK_Q154) (Coxiella burnetii (strain Q154)).